The sequence spans 418 residues: Ciliary microtubule-associated protein 2 (418 aa).

As to expression, sperm.

In Homo sapiens (Human), this protein is Ciliary microtubule-associated protein 2.